Here is a 261-residue protein sequence, read N- to C-terminus: Methylmalonyl-CoA decarboxylase (261 aa).

Residues 64-68 (AGHDI), G110, T132, and K253 contribute to the substrate site.

The protein belongs to the enoyl-CoA hydratase/isomerase family. Dimer of homotrimers.

The enzyme catalyses (R)-methylmalonyl-CoA + H(+) = propanoyl-CoA + CO2. In terms of biological role, catalyzes the decarboxylation of (R)-methylmalonyl-CoA to propionyl-CoA. Could be part of a pathway that converts succinate to propanoate. The sequence is that of Methylmalonyl-CoA decarboxylase (scpB) from Escherichia coli (strain K12).